A 586-amino-acid polypeptide reads, in one-letter code: Alpha-1,2-mannosyltransferase MNN5 (586 aa).

A signal peptide spans 1 to 29 (MLIRLKKRKILQVIVSAVVLILFFCSVHN). Residues Asn113, Asn136, Asn259, and Asn264 are each glycosylated (N-linked (GlcNAc...) asparagine).

Belongs to the MNN1/MNT family. Post-translationally, glycosylated.

The protein resides in the golgi apparatus. The protein localises to the cis-Golgi network. The protein operates within protein modification; protein glycosylation. Its function is as follows. Responsible for addition of first and second mannose residues to the outer chain of core N-linked polysaccharides and to O-linked mannotriose. Implicated in late Golgi modifications. The protein is Alpha-1,2-mannosyltransferase MNN5 (MNN5) of Saccharomyces cerevisiae (strain YJM789) (Baker's yeast).